We begin with the raw amino-acid sequence, 332 residues long: Phosphate acyltransferase (332 aa).

This sequence belongs to the PlsX family. As to quaternary structure, homodimer. Probably interacts with PlsY.

It is found in the cytoplasm. The enzyme catalyses a fatty acyl-[ACP] + phosphate = an acyl phosphate + holo-[ACP]. The protein operates within lipid metabolism; phospholipid metabolism. In terms of biological role, catalyzes the reversible formation of acyl-phosphate (acyl-PO(4)) from acyl-[acyl-carrier-protein] (acyl-ACP). This enzyme utilizes acyl-ACP as fatty acyl donor, but not acyl-CoA. In Streptococcus sanguinis (strain SK36), this protein is Phosphate acyltransferase.